The sequence spans 512 residues: MAIQAAEISQILKDQIKSFGQDAQVAEVGRVLSVGDGIARVYGLDNVQAGEMVEFPGGIQGMALNLEADNVGVVIFGSDRDIKEGDTVKRTNSIVDVPAGNELLGRVVDGLGNPLDGKGPINASERRVADSKAPGIIPRKSVHEPMATGLKAIDAMIPVGRGQRELIIGDRQTGKTAVALDTILNQKSYNDAAGDDENKKLYCIYVAVGQKRSTVAQLVKKLEETGAIEYSIVVAATASDPAPMQFLAPYAATAMAEFFRDNGRHALIVYDDLSKQAVSYRQMSLLLRRPPGREAYPGDVFYLHSRLLERSSKLNEDNGGGSLTALPVIETQGGDVSAFIPTNVISITDGQIFLETELFFQGIRPAVNTGLSVSRVGSSAQTKAMSSVAGPVKLSLAQYREMAAFAQFGSDLDASTQRLLARGARLTELMKQPQYSPLTNAEIVTMIFAGTNGFLDEIKVSDVGRFEEGLLNHMRSNKKDVLDWITNEDPKIKGDAADKLKAAIEEFAADFA.

169–176 (GDRQTGKT) contributes to the ATP binding site.

This sequence belongs to the ATPase alpha/beta chains family. F-type ATPases have 2 components, CF(1) - the catalytic core - and CF(0) - the membrane proton channel. CF(1) has five subunits: alpha(3), beta(3), gamma(1), delta(1), epsilon(1). CF(0) has four main subunits: a(1), b(1), b'(1) and c(9-12).

It localises to the cell inner membrane. The catalysed reaction is ATP + H2O + 4 H(+)(in) = ADP + phosphate + 5 H(+)(out). In terms of biological role, produces ATP from ADP in the presence of a proton gradient across the membrane. The alpha chain is a regulatory subunit. The polypeptide is ATP synthase subunit alpha (Jannaschia sp. (strain CCS1)).